A 460-amino-acid polypeptide reads, in one-letter code: Decaprenylphosphoryl-beta-D-ribose oxidase (460 aa).

In terms of domain architecture, FAD-binding PCMH-type spans 19-193 (TAPTVASVLS…LRATIEMTPT (175 aa)). Residues 52–62 (ARGLGRSYGDN), glycine 116, 121–124 (TVGG), 128–131 (CDIH), isoleucine 183, and tyrosine 414 contribute to the FAD site.

It belongs to the DprE1 family. In terms of assembly, monomer. Interacts with DprE2 to form an epimerase complex.

It localises to the periplasm. The catalysed reaction is trans,octa-cis-decaprenylphospho-beta-D-ribofuranose + FAD + H(+) = trans,octa-cis-decaprenylphospho-beta-D-erythro-pentofuranosid-2-ulose + FADH2. It participates in cell wall biogenesis; cell wall polysaccharide biosynthesis. Its activity is regulated as follows. Is inhibited by 8-nitro-benzothiazinones (BTZs) such as BTZ043; BTZs are a new class of antimycobacterial agents that block formation of both cell-wall lipoarabinomannan and arabinogalactan via inhibition of decaprenyl-phospho-arabinose (DPA) synthesis. BTZs are suicide inhibitors that act via covalent modification of DprE1; the essential nitro group of these compounds is reduced by DprE1 to a nitroso group, which then specifically reacts with Cys-386 of DprE1 to form an irreversible semimercaptal adduct. Other compounds with diverse scaffolds (dinitrobenzamides and nitrobenzoquinoxalines) also act as covalent DprE1 inhibitors. Functionally, component of the DprE1-DprE2 complex that catalyzes the 2-step epimerization of decaprenyl-phospho-ribose (DPR) to decaprenyl-phospho-arabinose (DPA), a key precursor that serves as the arabinose donor required for the synthesis of cell-wall arabinans. DprE1 catalyzes the first step of epimerization, namely FAD-dependent oxidation of the C2' hydroxyl of DPR to yield the keto intermediate decaprenyl-phospho-2'-keto-D-arabinose (DPX). The intermediate DPX is then transferred to DprE2 subunit of the epimerase complex, most probably through a 'substrate channel' at the interface of DprE1-DprE2 complex. Can also use farnesyl-phosphoryl-beta-D-ribofuranose (FPR) as substrate in vitro. Appears to be essential for the growth of M.smegmatis. This Mycolicibacterium smegmatis (strain ATCC 700084 / mc(2)155) (Mycobacterium smegmatis) protein is Decaprenylphosphoryl-beta-D-ribose oxidase.